The chain runs to 932 residues: Isoleucine--tRNA ligase (932 aa).

The short motif at 59-69 is the 'HIGH' region element; the sequence is PYANGTIHIGH. Position 562 (E562) interacts with L-isoleucyl-5'-AMP. Residues 603–607 carry the 'KMSKS' region motif; it reads KMSKS. K606 serves as a coordination point for ATP. C899, C902, C915, and C918 together coordinate Zn(2+).

It belongs to the class-I aminoacyl-tRNA synthetase family. IleS type 1 subfamily. As to quaternary structure, monomer. The cofactor is Zn(2+).

The protein localises to the cytoplasm. It catalyses the reaction tRNA(Ile) + L-isoleucine + ATP = L-isoleucyl-tRNA(Ile) + AMP + diphosphate. Its function is as follows. Catalyzes the attachment of isoleucine to tRNA(Ile). As IleRS can inadvertently accommodate and process structurally similar amino acids such as valine, to avoid such errors it has two additional distinct tRNA(Ile)-dependent editing activities. One activity is designated as 'pretransfer' editing and involves the hydrolysis of activated Val-AMP. The other activity is designated 'posttransfer' editing and involves deacylation of mischarged Val-tRNA(Ile). The sequence is that of Isoleucine--tRNA ligase from Pasteurella multocida (strain Pm70).